A 55-amino-acid polypeptide reads, in one-letter code: Large ribosomal subunit protein bL33 (55 aa).

Belongs to the bacterial ribosomal protein bL33 family.

This Bordetella pertussis (strain Tohama I / ATCC BAA-589 / NCTC 13251) protein is Large ribosomal subunit protein bL33.